Reading from the N-terminus, the 249-residue chain is Mediator of RNA polymerase II transcription subunit 6 (249 aa).

The span at 156–173 shows a compositional bias: basic and acidic residues; sequence SDRSKSDKKDANSAKDEN. 2 disordered regions span residues 156 to 177 and 198 to 249; these read SDRS…SGTL and IPPM…KKSK. The segment covering 217–228 has biased composition (polar residues); sequence TARNASEMNNAT. Positions 233–249 are enriched in basic and acidic residues; that stretch reads IKTEGVDMKPPPEKKSK.

Belongs to the Mediator complex subunit 6 family. Component of the Mediator complex, which includes at least MED4, MED6, MED14, MED17, MED18, MED20, MED21, MED23, MED24, MED27, MED30 and MED31.

Its subcellular location is the nucleus. Component of the Mediator complex, a coactivator involved in the regulated transcription of nearly all RNA polymerase II-dependent genes. Mediator functions as a bridge to convey information from gene-specific regulatory proteins to the basal RNA polymerase II transcription machinery. Mediator is recruited to promoters by direct interactions with regulatory proteins and serves as a scaffold for the assembly of a functional preinitiation complex with RNA polymerase II and the general transcription factors. Required for activated transcription of the MtnA, MtnB and MtnD genes. The polypeptide is Mediator of RNA polymerase II transcription subunit 6 (MED6) (Drosophila melanogaster (Fruit fly)).